The sequence spans 208 residues: Small ribosomal subunit protein uS4 (208 aa).

The 61-residue stretch at 98–158 folds into the S4 RNA-binding domain; it reads RRLDNVVYRL…EKNRKISVVA (61 aa).

The protein belongs to the universal ribosomal protein uS4 family. As to quaternary structure, part of the 30S ribosomal subunit. Contacts protein S5. The interaction surface between S4 and S5 is involved in control of translational fidelity.

Functionally, one of the primary rRNA binding proteins, it binds directly to 16S rRNA where it nucleates assembly of the body of the 30S subunit. With S5 and S12 plays an important role in translational accuracy. This Lawsonia intracellularis (strain PHE/MN1-00) protein is Small ribosomal subunit protein uS4.